The sequence spans 333 residues: Probable tRNA pseudouridine synthase B (333 aa).

Asp66 acts as the Nucleophile in catalysis. One can recognise a PUA domain in the interval 233–308 (LKKIIVKDSA…EVVEITRVIM (76 aa)).

It belongs to the pseudouridine synthase TruB family. Type 2 subfamily.

It catalyses the reaction uridine(55) in tRNA = pseudouridine(55) in tRNA. Its function is as follows. Could be responsible for synthesis of pseudouridine from uracil-55 in the psi GC loop of transfer RNAs. The chain is Probable tRNA pseudouridine synthase B from Methanococcus maripaludis (strain C5 / ATCC BAA-1333).